A 287-amino-acid chain; its full sequence is MKVLLLTGLGALFFAYYWDDNFDPASLQGARVLLTGASAGVGEELAYHYARLGSHLVLTAHTEALLQKVVGNCRKLGAPKVFYIAADMASPEAPESVVQFALDKLGGLDYLVLNHIGGVPAGTRARTPQATRWLMQVNFLSYVQLTSRALPSLTDSKGSLVVVSSLLGRVPTSFSTPYSAAKFALDSFFGSLRRELDVQDVNVAITMCVLGLRDRASAAEAVRGVTRVKAAPGPKAALAVIRGGATRAAGVFYPWRFHLLCLLRRWLPRPRAWFIRQDLNVTAAAAA.

The N-terminal stretch at 1-15 is a signal peptide; sequence MKVLLLTGLGALFFA. NADP(+) contacts are provided by residues 36-62, 87-88, and 114-116; these read GASAGVGEELAYHYARLGSHLVLTAHT, DM, and NHI. Ser-165 is a substrate binding site. Residue Tyr-178 is the Proton acceptor of the active site. NADP(+)-binding positions include 178 to 182 and 211 to 217; these read YSAAK and GLRDRAS.

Belongs to the short-chain dehydrogenases/reductases (SDR) family.

The protein localises to the secreted. The catalysed reaction is cortisone + NADPH + H(+) = cortisol + NADP(+). Functionally, unidirectional NADP(+)-dependent cortisol dehydrogenase (in vitro). In Macaca fascicularis (Crab-eating macaque), this protein is Hydroxysteroid 11-beta-dehydrogenase 1-like protein (HSD11B1L).